The chain runs to 208 residues: Uracil phosphoribosyltransferase (208 aa).

5-phospho-alpha-D-ribose 1-diphosphate-binding positions include Arg-78, Arg-103, and 130–138 (DPMLATGGS). Residues Ile-193 and 198–200 (GDA) contribute to the uracil site. Asp-199 serves as a coordination point for 5-phospho-alpha-D-ribose 1-diphosphate.

It belongs to the UPRTase family. The cofactor is Mg(2+).

The catalysed reaction is UMP + diphosphate = 5-phospho-alpha-D-ribose 1-diphosphate + uracil. The protein operates within pyrimidine metabolism; UMP biosynthesis via salvage pathway; UMP from uracil: step 1/1. With respect to regulation, allosterically activated by GTP. In terms of biological role, catalyzes the conversion of uracil and 5-phospho-alpha-D-ribose 1-diphosphate (PRPP) to UMP and diphosphate. The chain is Uracil phosphoribosyltransferase from Shewanella sediminis (strain HAW-EB3).